The primary structure comprises 400 residues: Large envelope protein (400 aa).

At M1 the chain carries N-acetylmethionine. G2 carries N-myristoyl glycine; by host lipidation. A pre-S1 region spans residues 2-119 (GAPLSTTRRG…PPLRDTHPQA (118 aa)). Residues 2–174 (GAPLSTTRRG…SSKTGGPAMN (173 aa)) form a pre-S region. Residues 2–181 (GAPLSTTRRG…AMNMENITSG (180 aa)) are Virion surface; in external conformation-facing. Over 2–253 (GAPLSTTRRG…PGYRWMCLRR (252 aa)) the chain is Intravirion; in internal conformation. A glycan (N-linked (GlcNAc...) asparagine) is linked at P4. A disordered region spans residues 84–110 (VLTTLPADPPPASTNRLSGRKPTQVSP). Over residues 96 to 109 (STNRLSGRKPTQVS) the composition is skewed to polar residues. The tract at residues 120–174 (MQWNSTHFHQALLDPRVRALYFPAGGSSSGTQNPAPTIASLTSSISSKTGGPAMN) is pre-S2. Residues 182 to 202 (LLGPLRVLQAVCFLLTKILTI) form a helical membrane-spanning segment. Residues 203 to 253 (PQSLDSWWTSLNFLGGLPRCPGQNSQSPTSNHLPTSCPPTCPGYRWMCLRR) are Intravirion; in external conformation-facing. The chain crosses the membrane as a helical span at residues 254 to 274 (FIIFLFILLLCLIFLLVLLDY). Residues 275 to 348 (QGMLPVCPLL…WASARFSWLS (74 aa)) lie on the Virion surface side of the membrane. N320 is a glycosylation site (N-linked (GlcNAc...) asparagine; by host). The chain crosses the membrane as a helical span at residues 349-369 (LLVQFVQWCVGLSPTVWLLVI). Residues 370 to 375 (WMIWYW) are Intravirion-facing. Residues 376–398 (GPNLCSILSPFIPLLPIFCYLWV) traverse the membrane as a helical segment. Over 399–400 (SI) the chain is Virion surface.

Belongs to the orthohepadnavirus major surface antigen family. In its internal form (Li-HBsAg), interacts with the capsid protein and with the isoform S. Interacts with host chaperone CANX. In terms of assembly, associates with host chaperone CANX through its pre-S2 N glycan; this association may be essential for isoform M proper secretion. As to quaternary structure, interacts with isoform L. Interacts with the antigens of satellite virus HDV (HDVAgs); this interaction is required for encapsidation of HDV genomic RNA. Isoform M is N-terminally acetylated by host at a ratio of 90%, and N-glycosylated by host at the pre-S2 region. Post-translationally, myristoylated.

Its subcellular location is the virion membrane. The large envelope protein exists in two topological conformations, one which is termed 'external' or Le-HBsAg and the other 'internal' or Li-HBsAg. In its external conformation the protein attaches the virus to cell receptors and thereby initiating infection. This interaction determines the species specificity and liver tropism. This attachment induces virion internalization predominantly through caveolin-mediated endocytosis. The large envelope protein also assures fusion between virion membrane and endosomal membrane. In its internal conformation the protein plays a role in virion morphogenesis and mediates the contact with the nucleocapsid like a matrix protein. Its function is as follows. The middle envelope protein plays an important role in the budding of the virion. It is involved in the induction of budding in a nucleocapsid independent way. In this process the majority of envelope proteins bud to form subviral lipoprotein particles of 22 nm of diameter that do not contain a nucleocapsid. In Homo sapiens (Human), this protein is Large envelope protein.